The chain runs to 205 residues: Holliday junction branch migration complex subunit RuvA (205 aa).

Positions 1 to 64 are domain I; it reads MIGKLKGLID…EDQIKLFGFR (64 aa). A domain II region spans residues 65–143; sequence SDLEREWFRL…GFASVDPAVA (79 aa). Residues 144 to 153 are flexible linker; that stretch reads HLSGAIEERS. Residues 153-205 are domain III; it reads SAPRPVADAISALVNLGYGQPQAAAAIAAAARSAGDAAQTAQLIKLGLKELSK.

It belongs to the RuvA family. In terms of assembly, homotetramer. Forms an RuvA(8)-RuvB(12)-Holliday junction (HJ) complex. HJ DNA is sandwiched between 2 RuvA tetramers; dsDNA enters through RuvA and exits via RuvB. An RuvB hexamer assembles on each DNA strand where it exits the tetramer. Each RuvB hexamer is contacted by two RuvA subunits (via domain III) on 2 adjacent RuvB subunits; this complex drives branch migration. In the full resolvosome a probable DNA-RuvA(4)-RuvB(12)-RuvC(2) complex forms which resolves the HJ.

It is found in the cytoplasm. Functionally, the RuvA-RuvB-RuvC complex processes Holliday junction (HJ) DNA during genetic recombination and DNA repair, while the RuvA-RuvB complex plays an important role in the rescue of blocked DNA replication forks via replication fork reversal (RFR). RuvA specifically binds to HJ cruciform DNA, conferring on it an open structure. The RuvB hexamer acts as an ATP-dependent pump, pulling dsDNA into and through the RuvAB complex. HJ branch migration allows RuvC to scan DNA until it finds its consensus sequence, where it cleaves and resolves the cruciform DNA. This chain is Holliday junction branch migration complex subunit RuvA, found in Rhodopseudomonas palustris (strain BisA53).